We begin with the raw amino-acid sequence, 441 residues long: Ankyrin repeat and MYND domain-containing protein 2 (441 aa).

ANK repeat units lie at residues 45-74 (NGMT…DVNC), 79-108 (HGYT…ETDV), and 159-188 (KLAG…NPLL). Zn(2+)-binding residues include Cys320, Cys323, Cys332, Cys335, Cys341, Cys345, His353, and Cys357. The segment at 320–357 (CTTCGEKGASKRCSVCKMVIYCDQTCQKTHWFTHKKIC) adopts an MYND-type zinc-finger fold. Positions 374–384 (EKRQEENHGKL) are enriched in basic and acidic residues. Residues 374–441 (EKRQEENHGK…APAGPQVSEE (68 aa)) form a disordered region.

As to quaternary structure, interacts with the retinal-specific guanylyl cyclase GC1.

It localises to the cell projection. Its subcellular location is the cilium. Its function is as follows. May be involved in the trafficking of signaling proteins to the cilia. This Homo sapiens (Human) protein is Ankyrin repeat and MYND domain-containing protein 2 (ANKMY2).